The chain runs to 22 residues: Brain peptide MVPVPVHHMADELLRNGPDTVI (22 aa).

The sequence is that of Brain peptide MVPVPVHHMADELLRNGPDTVI from Apis mellifera (Honeybee).